Reading from the N-terminus, the 41-residue chain is Trypsin inhibitor 2c (41 aa).

Intrachain disulfides connect cysteine 11-cysteine 32 and cysteine 15-cysteine 28.

In terms of biological role, inhibits bovine trypsin with a Ki of 0.174 nM and trypsin-like proteases from G.mellonella larvae. Has no activity against serine proteases chymotrypsin, subtilisin and elastase. Has no activity against cysteine proteases from beetle gut. The protein is Trypsin inhibitor 2c of Fagopyrum esculentum (Common buckwheat).